Here is a 140-residue protein sequence, read N- to C-terminus: Nucleoside diphosphate kinase (140 aa).

ATP-binding residues include lysine 11, phenylalanine 59, arginine 87, threonine 93, arginine 104, and asparagine 114. Histidine 117 serves as the catalytic Pros-phosphohistidine intermediate.

It belongs to the NDK family. In terms of assembly, homotetramer. Mg(2+) serves as cofactor.

Its subcellular location is the cytoplasm. The catalysed reaction is a 2'-deoxyribonucleoside 5'-diphosphate + ATP = a 2'-deoxyribonucleoside 5'-triphosphate + ADP. It catalyses the reaction a ribonucleoside 5'-diphosphate + ATP = a ribonucleoside 5'-triphosphate + ADP. Its function is as follows. Major role in the synthesis of nucleoside triphosphates other than ATP. The ATP gamma phosphate is transferred to the NDP beta phosphate via a ping-pong mechanism, using a phosphorylated active-site intermediate. The chain is Nucleoside diphosphate kinase from Methylorubrum populi (strain ATCC BAA-705 / NCIMB 13946 / BJ001) (Methylobacterium populi).